A 192-amino-acid chain; its full sequence is ATP synthase protein MI25 (192 aa).

Residues Ile29–Ser49 traverse the membrane as a helical segment.

Belongs to the ATPase protein MI25 family. F-type ATPases have 2 components, CF(1) - the catalytic core - and CF(0) - the membrane proton channel. CF(1) has five subunits: alpha(3), beta(3), gamma(1), delta(1), epsilon(1). CF(0) has three main subunits: a, b and c.

It is found in the mitochondrion membrane. In terms of biological role, this is one of the chains of the nonenzymatic component (CF(0) subunit) of the mitochondrial ATPase complex. The protein is ATP synthase protein MI25 (ATP4) of Arabidopsis thaliana (Mouse-ear cress).